The chain runs to 133 residues: Glycine cleavage system H protein (133 aa).

A Lipoyl-binding domain is found at 30–112 (TITVGITHHA…YGAGWFFKIK (83 aa)). Lysine 71 carries the post-translational modification N6-lipoyllysine.

The protein belongs to the GcvH family. As to quaternary structure, the glycine cleavage system is composed of four proteins: P, T, L and H. The cofactor is (R)-lipoate.

Its function is as follows. The glycine cleavage system catalyzes the degradation of glycine. The H protein shuttles the methylamine group of glycine from the P protein to the T protein. The sequence is that of Glycine cleavage system H protein from Neisseria gonorrhoeae (strain ATCC 700825 / FA 1090).